Here is a 1210-residue protein sequence, read N- to C-terminus: ATP-dependent helicase/nuclease subunit A (1210 aa).

The UvrD-like helicase ATP-binding domain occupies glutamine 27 to glutamine 483. Residue alanine 48–threonine 55 coordinates ATP. The UvrD-like helicase C-terminal domain maps to glutamine 512 to glycine 798.

Belongs to the helicase family. AddA subfamily. In terms of assembly, heterodimer of AddA and AddB/RexB. It depends on Mg(2+) as a cofactor.

It catalyses the reaction Couples ATP hydrolysis with the unwinding of duplex DNA by translocating in the 3'-5' direction.. It carries out the reaction ATP + H2O = ADP + phosphate + H(+). The heterodimer acts as both an ATP-dependent DNA helicase and an ATP-dependent, dual-direction single-stranded exonuclease. Recognizes the chi site generating a DNA molecule suitable for the initiation of homologous recombination. The AddA nuclease domain is required for chi fragment generation; this subunit has the helicase and 3' -&gt; 5' nuclease activities. The sequence is that of ATP-dependent helicase/nuclease subunit A from Streptococcus pyogenes serotype M5 (strain Manfredo).